A 255-amino-acid polypeptide reads, in one-letter code: Hydroxylmethylpyrimidine kinase (255 aa).

The pyridoxal 5'-phosphate site is built by glycine 18, glutamine 43, and asparagine 110. A 4-amino-5-hydroxymethyl-2-methylpyrimidine-binding site is contributed by glutamine 43. A disulfide bond links cysteine 195 and cysteine 207. Position 208 (serine 208) interacts with pyridoxal 5'-phosphate.

The protein belongs to the ThiD family. In terms of assembly, homodimer. In terms of processing, crystals show a disulfide bond between Cys-195 and Cys-207. This disulfide is possibly an artifact of the purification and crystallization conditions. However, as it is adjacent to the conserved GSGC of the oxyanion hole, this disulfide may help to orient the backbone amides toward the oxanion intermediate.

The enzyme catalyses 4-amino-5-hydroxymethyl-2-methylpyrimidine + ATP = 4-amino-2-methyl-5-(phosphooxymethyl)pyrimidine + ADP + H(+). The protein operates within cofactor biosynthesis; thiamine diphosphate biosynthesis. Its activity is regulated as follows. Inhibited by pyridoxal phosphate at high micromolar concentrations. Its function is as follows. Catalyzes the phosphorylation of hydroxymethylpyrimidine (HMP) to hydroxymethylpyrimidine phosphate (HMP-P). Unlike other HMPKs, it cannot catalyze the phosphorylation of HMP-P to generate the diphosphate HMP-PP. Shows no activity with pyridoxal, pyridoxamine or pyridoxine. Does not show phosphatase activity. In Acinetobacter baumannii (strain IS-123), this protein is Hydroxylmethylpyrimidine kinase.